The chain runs to 142 residues: ATP synthase subunit b' (142 aa).

Residues 7-27 (TLPLMMFQFFLLVAVLNAVFF) form a helical membrane-spanning segment.

The protein belongs to the ATPase B chain family. As to quaternary structure, F-type ATPases have 2 components, F(1) - the catalytic core - and F(0) - the membrane proton channel. F(1) has five subunits: alpha(3), beta(3), gamma(1), delta(1), epsilon(1). F(0) has four main subunits: a(1), b(1), b'(1) and c(10-14). The alpha and beta chains form an alternating ring which encloses part of the gamma chain. F(1) is attached to F(0) by a central stalk formed by the gamma and epsilon chains, while a peripheral stalk is formed by the delta, b and b' chains.

The protein resides in the cellular thylakoid membrane. Its function is as follows. F(1)F(0) ATP synthase produces ATP from ADP in the presence of a proton or sodium gradient. F-type ATPases consist of two structural domains, F(1) containing the extramembraneous catalytic core and F(0) containing the membrane proton channel, linked together by a central stalk and a peripheral stalk. During catalysis, ATP synthesis in the catalytic domain of F(1) is coupled via a rotary mechanism of the central stalk subunits to proton translocation. Component of the F(0) channel, it forms part of the peripheral stalk, linking F(1) to F(0). The b'-subunit is a diverged and duplicated form of b found in plants and photosynthetic bacteria. The sequence is that of ATP synthase subunit b' from Acaryochloris marina (strain MBIC 11017).